Consider the following 268-residue polypeptide: Undecaprenyl-diphosphatase (268 aa).

7 consecutive transmembrane segments (helical) span residues 47 to 67 (FTVLIQPGAILAIVVIYFAKL), 83 to 103 (FVIGVLAAFLPAVIVGLIAGK), 109 to 129 (LFNPWVVCFSLIVGGAVLMWV), 144 to 164 (FPLPMYVWIGIAQCVAMIPGV), 184 to 204 (AAEFSFFLAIPTMTGAFAYDF), 218 to 238 (TVAIGFVVSFVTAIIVVKAFL), and 246 to 266 (FTFFAWWRVIVGTLGLIALAL).

It belongs to the UppP family.

It is found in the cell inner membrane. The catalysed reaction is di-trans,octa-cis-undecaprenyl diphosphate + H2O = di-trans,octa-cis-undecaprenyl phosphate + phosphate + H(+). Its function is as follows. Catalyzes the dephosphorylation of undecaprenyl diphosphate (UPP). Confers resistance to bacitracin. The sequence is that of Undecaprenyl-diphosphatase from Nitrobacter winogradskyi (strain ATCC 25391 / DSM 10237 / CIP 104748 / NCIMB 11846 / Nb-255).